The sequence spans 202 residues: UPF0637 protein Exig_2520 (202 aa).

It belongs to the UPF0637 family.

The polypeptide is UPF0637 protein Exig_2520 (Exiguobacterium sibiricum (strain DSM 17290 / CCUG 55495 / CIP 109462 / JCM 13490 / 255-15)).